A 1242-amino-acid chain; its full sequence is DNA polymerase catalytic subunit (1242 aa).

4 disordered regions span residues 14 to 38 (GAVAGGRRQRSQPGSAQGSGKRPPQ), 644 to 665 (LQSAPSSQDGVSPGSGSNSSSS), 877 to 898 (EGDSEESSALPEGLETSSGGSN), and 1108 to 1163 (TAPQ…KPPS). Low complexity predominate over residues 653-665 (GVSPGSGSNSSSS). The span at 1110-1119 (PQGSSDNGDS) shows a compositional bias: polar residues. A compositionally biased stretch (basic and acidic residues) spans 1145–1155 (ESNRRGGEPAK).

This sequence belongs to the DNA polymerase type-B family. Forms a complex with the ssDNA-binding protein UL57, the DNA polymerase processivity factor UL44, and the alkaline exonuclease UL98. Interacts with the putative helicase-primase complex composed of UL70, UL102 and UL105 proteins; these interactions may coordinate leading and lagging strand DNA synthesis at the replication fork.

It localises to the host nucleus. It carries out the reaction DNA(n) + a 2'-deoxyribonucleoside 5'-triphosphate = DNA(n+1) + diphosphate. In terms of biological role, replicates viral genomic DNA in the late phase of lytic infection, producing long concatemeric DNA. The replication complex is composed of six viral proteins: the DNA polymerase, processivity factor, primase, primase-associated factor, helicase, and ssDNA-binding protein. This chain is DNA polymerase catalytic subunit (UL54), found in Homo sapiens (Human).